The sequence spans 1058 residues: Probable plasma membrane ATPase (1058 aa).

Residues 1-29 (MDNNQIPKNSPESSAINSAESSPKSNVSS) are compositionally biased toward polar residues. Positions 1–123 (MDNNQIPKNS…SSSGKKEEDY (123 aa)) are disordered. The Cytoplasmic segment spans residues 1 to 212 (MDNNQIPKNS…DVKRYPILEF (212 aa)). Positions 31–40 (VLHENHHKEQ) are enriched in basic and acidic residues. Positions 41-66 (QQLQQQLQQEQQQQQLPTTPQSEPTQ) are enriched in low complexity. Over residues 96 to 111 (SLKTISGYPSSKNTEA) the composition is skewed to polar residues. The helical transmembrane segment at 213-232 (LYFMWNPLSWTMEVAAIVSI) threads the bilayer. At 233–237 (ALLDW) the chain is on the extracellular side. Residues 238-258 (VDFILICALLLLNATIGFIEE) form a helical membrane-spanning segment. The Cytoplasmic portion of the chain corresponds to 259-387 (NTAGNAVEAL…GHLQVILRNI (129 aa)). The chain crosses the membrane as a helical span at residues 388–407 (GLFCISFIAIWVLVELLVDF). Residues 408–425 (LGYDGYCHGVGGGRCLPL) lie on the Extracellular side of the membrane. Residues 426–447 (NNALVLLVGGIPIAMPTVLSVT) form a helical membrane-spanning segment. Residues 448–783 (MAIGATQLSK…SSRKIFQRMR (336 aa)) lie on the Cytoplasmic side of the membrane. Residue Asp480 is the 4-aspartylphosphate intermediate of the active site. Mg(2+) contacts are provided by Asp728 and Asp732. The helical transmembrane segment at 784-805 (NYVIYSVAATVRICTTFGILTV) threads the bilayer. Topologically, residues 806–810 (AWNFK) are extracellular. A helical membrane pass occupies residues 811–833 (FPTIATVIIAILNDGTMLTISKD). Residues 834 to 849 (RVRARNEPDQWNLFEV) are Cytoplasmic-facing. A helical membrane pass occupies residues 850 to 870 (FTMALCYGFYLVGSTIVFFAI). Residues 871-889 (IHDGTWFHDAINLRILTDN) are Extracellular-facing. A helical transmembrane segment spans residues 890–910 (ELRGLIYLQVSISGLATIFVS). Over 911 to 922 (RSQGFSYFERPG) the chain is Cytoplasmic. The chain crosses the membrane as a helical span at residues 923–943 (NLVIFAFVMSQIVATFIGVYG). Residues 944–967 (FRGYPHDSFSDNPDYPVHGTNFQG) are Extracellular-facing. Residues 968-988 (CGWGWAVCAWIWCFLWYIPMD) form a helical membrane-spanning segment. The Cytoplasmic portion of the chain corresponds to 989-1058 (FIKLGVTYIL…HKSVVTDNKV (70 aa)).

The protein belongs to the cation transport ATPase (P-type) (TC 3.A.3) family. Type IIIA subfamily.

The protein localises to the cell membrane. The enzyme catalyses ATP + H2O + H(+)(in) = ADP + phosphate + 2 H(+)(out). Its activity is regulated as follows. Acid pH levels increase its ATPase activity. In terms of biological role, P-type plasma membrane H+-ATPase (proton pump). The proton gradient it generates drives the active transport of nutrients by H(+) symport. The resulting external acidification and/or internal alkinization may mediate growth responses. This Dictyostelium discoideum (Social amoeba) protein is Probable plasma membrane ATPase (patB).